A 500-amino-acid polypeptide reads, in one-letter code: L-arabinose isomerase (500 aa).

Positions 306, 333, 349, and 448 each coordinate Mn(2+).

The protein belongs to the arabinose isomerase family. Mn(2+) serves as cofactor.

The enzyme catalyses beta-L-arabinopyranose = L-ribulose. It functions in the pathway carbohydrate degradation; L-arabinose degradation via L-ribulose; D-xylulose 5-phosphate from L-arabinose (bacterial route): step 1/3. Catalyzes the conversion of L-arabinose to L-ribulose. The polypeptide is L-arabinose isomerase (Shewanella sp. (strain MR-4)).